Reading from the N-terminus, the 299-residue chain is Ribosomal RNA small subunit methyltransferase H (299 aa).

Residues 36–38 (GGH), Asp-55, Tyr-82, Asp-103, and Gln-110 contribute to the S-adenosyl-L-methionine site. 2 stretches are compositionally biased toward basic and acidic residues: residues 269–282 (PVRPSEEEIRENPR) and 289–299 (RAAERIEEGGD). The disordered stretch occupies residues 269-299 (PVRPSEEEIRENPRARSGRLRAAERIEEGGD).

This sequence belongs to the methyltransferase superfamily. RsmH family.

Its subcellular location is the cytoplasm. The catalysed reaction is cytidine(1402) in 16S rRNA + S-adenosyl-L-methionine = N(4)-methylcytidine(1402) in 16S rRNA + S-adenosyl-L-homocysteine + H(+). Functionally, specifically methylates the N4 position of cytidine in position 1402 (C1402) of 16S rRNA. The protein is Ribosomal RNA small subunit methyltransferase H of Thermotoga maritima (strain ATCC 43589 / DSM 3109 / JCM 10099 / NBRC 100826 / MSB8).